An 868-amino-acid polypeptide reads, in one-letter code: Rifampicin phosphotransferase (868 aa).

The ATP-binding stretch occupies residues 1 to 313 (MSSFVLDFQE…IYIVQSRPIT (313 aa)). K22, R116, G131, T135, Q182, E296, Q308, and R310 together coordinate ATP. Residues 326-756 (NHVYISVGHQ…TSDGEIITGK (431 aa)) are rifampicin-binding. Positions 769-867 (GLPVSSGVVE…VHGTEGYIEV (99 aa)) are swivel phosphohistidine. H827 serves as the catalytic Tele-phosphohistidine intermediate.

Belongs to the rifampicin phosphotransferase family.

It catalyses the reaction rifampicin + ATP + H2O = 21-phosphorifampicin + AMP + phosphate + 2 H(+). Its function is as follows. Catalyzes the phosphorylation of rifampicin, also known as rifampin (RIF), leading to its inactivation. Confers high level resistance to a variety of clinically used rifamycin antibiotics. Does not show phosphoenolpyruvate (PEP) synthase activity. This is Rifampicin phosphotransferase from Bacillus cereus (strain ATCC 14579 / DSM 31 / CCUG 7414 / JCM 2152 / NBRC 15305 / NCIMB 9373 / NCTC 2599 / NRRL B-3711).